A 294-amino-acid chain; its full sequence is Diaminopimelate epimerase (294 aa).

Positions 13, 46, and 69 each coordinate substrate. Residue cysteine 78 is the Proton donor of the active site. Substrate contacts are provided by residues 79 to 80, asparagine 173, asparagine 206, and 224 to 225; these read GN and ER. The active-site Proton acceptor is the cysteine 233. Position 234–235 (234–235) interacts with substrate; the sequence is GT.

It belongs to the diaminopimelate epimerase family. As to quaternary structure, homodimer.

The protein localises to the cytoplasm. It catalyses the reaction (2S,6S)-2,6-diaminopimelate = meso-2,6-diaminopimelate. It participates in amino-acid biosynthesis; L-lysine biosynthesis via DAP pathway; DL-2,6-diaminopimelate from LL-2,6-diaminopimelate: step 1/1. Its function is as follows. Catalyzes the stereoinversion of LL-2,6-diaminopimelate (L,L-DAP) to meso-diaminopimelate (meso-DAP), a precursor of L-lysine and an essential component of the bacterial peptidoglycan. This is Diaminopimelate epimerase from Variovorax paradoxus (strain S110).